The chain runs to 72 residues: Mitotic-spindle organizing protein 1 (72 aa).

It belongs to the MOZART1 family. Part of the gamma-tubulin complex.

It localises to the cytoplasm. Its subcellular location is the cytoskeleton. It is found in the microtubule organizing center. The protein resides in the centrosome. The protein localises to the spindle. Functionally, required for gamma-tubulin complex recruitment to the centrosome. The polypeptide is Mitotic-spindle organizing protein 1 (mzt1) (Xenopus tropicalis (Western clawed frog)).